The primary structure comprises 512 residues: Spermatocyte protein spe-8 (512 aa).

The tract at residues 1 to 85 is disordered; the sequence is MRSKSSEGDL…PKPSSDNNNS (85 aa). Residues 15-41 show a composition bias toward basic and acidic residues; it reads TQSREDKETTATYSEDTKPETQKERNA. The segment covering 68–78 has biased composition (pro residues); that stretch reads EAPPPPPPPKP. The SH2 domain occupies 114 to 205; the sequence is FYHGFMGRNE…YEGMTLICGL (92 aa). The region spanning 217–485 is the Protein kinase domain; it reads VTLNKKLGEG…KEEVGFHEIE (269 aa). Residues 223-231 and lysine 250 each bind ATP; that span reads LGEGQFGEV. Aspartate 344 functions as the Proton acceptor in the catalytic mechanism.

Belongs to the protein kinase superfamily. Tyr protein kinase family. Fes/fps subfamily. As to expression, expression is restricted to male germline.

The protein localises to the cell membrane. It is found in the cytoplasm. The catalysed reaction is L-tyrosyl-[protein] + ATP = O-phospho-L-tyrosyl-[protein] + ADP + H(+). In terms of biological role, probable non-receptor tyrosine-protein kinase which plays a role in spermatid activation (spermiogenesis) in hermaphrodites. In Caenorhabditis elegans, this protein is Spermatocyte protein spe-8.